The following is a 350-amino-acid chain: Cephaeline 6'-O-methyltransferase IpeOMT1 (350 aa).

S-adenosyl-L-methionine-binding residues include Gly193, Asp216, Asp236, Met237, and Lys250. His254 serves as the catalytic Proton acceptor.

The protein belongs to the class I-like SAM-binding methyltransferase superfamily. Cation-independent O-methyltransferase family. As to expression, expressed in roots.

The protein localises to the cytoplasm. The protein resides in the cytosol. It carries out the reaction cephaeline + S-adenosyl-L-methionine = emetine + S-adenosyl-L-homocysteine + H(+). It catalyses the reaction deacetylisoipecoside + S-adenosyl-L-methionine = 6-O-methyldeacetylisoipecoside + S-adenosyl-L-homocysteine + H(+). The enzyme catalyses 7-O-methyldeacetylisoipecoside + S-adenosyl-L-methionine = 6,7-O,O-dimethyldeacetylisoipecoside + S-adenosyl-L-homocysteine + H(+). The catalysed reaction is norcoclaurine + S-adenosyl-L-methionine = coclaurine + S-adenosyl-L-homocysteine + H(+). It carries out the reaction (S)-norprotosinomenine + S-adenosyl-L-methionine = (S)-6-O-methylnorprotosinomenine + S-adenosyl-L-homocysteine + H(+). It catalyses the reaction (R)-norprotosinomenine + S-adenosyl-L-methionine = (R)-6-O-methylnorprotosinomenine + S-adenosyl-L-homocysteine + H(+). The protein operates within alkaloid biosynthesis. O-methyltransferase involved in the biosynthesis of ipecac and benzylisoquinoline monoterpenoid-isoquinoline alkaloids natural products, starting by the condensation of dopamine and secologanin, and including emetine and cephaeline, drugs used both as anti-protozoal (e.g. treatment of ameobiasis) and as emetic agents. Mediates cephaeline 6'-O-methylation to produce emetine. Catalyzes the 6-O-methylation of N-deacetylisoipecoside, 7-O-methyl-N-deacetylisoipecoside, isococlaurine, norcoclaurine, (S)-norprotosinomenine and (R)-norprotosinomenine, and, with a lower efficiency, of 4'-O-methyllaudanosoline, isoorientaline and protosinomenine. Supports also the 4'-O-methylation of nororientaline. In Carapichea ipecacuanha (Ipecac), this protein is Cephaeline 6'-O-methyltransferase IpeOMT1.